The sequence spans 223 residues: AMSH-like ubiquitin thioesterase 2 (223 aa).

One can recognise an MPN domain in the interval 49–177 (VHISERLLED…YGIFKLTDPG (129 aa)). Zn(2+) contacts are provided by histidine 127, histidine 129, aspartate 140, histidine 142, cysteine 185, histidine 191, and histidine 193. The JAMM motif signature appears at 127–140 (HTHPSQGCFMSSVD).

This sequence belongs to the peptidase M67C family. Zn(2+) serves as cofactor.

In terms of biological role, zinc metalloprotease that cleaves 'Lys-48'- and 'Lys-63'-linked polyubiquitin chains. The protein is AMSH-like ubiquitin thioesterase 2 (AMSH2) of Arabidopsis thaliana (Mouse-ear cress).